The chain runs to 68 residues: Protein SlyX homolog (68 aa).

This sequence belongs to the SlyX family.

This chain is Protein SlyX homolog, found in Pseudomonas putida (strain GB-1).